Consider the following 610-residue polypeptide: Ectonucleoside triphosphate diphosphohydrolase 7 (610 aa).

At 1–28 (MARISFSCLFPASWHCSLPSVTQFSRQR) the chain is on the cytoplasmic side. A helical transmembrane segment spans residues 29–49 (VALLIISVAVFILVFAAVADL). Residues 50–555 (QLWSSRAFRD…VSWFRISFVY (506 aa)) are Vesicular-facing. Glutamate 217 acts as the Proton acceptor in catalysis. 2 N-linked (GlcNAc...) asparagine glycosylation sites follow: asparagine 336 and asparagine 400. Residues cysteine 454 and cysteine 483 are joined by a disulfide bond. Residues 556-576 (NHYLFFACILVVLLSIVLYIL) form a helical membrane-spanning segment. Topologically, residues 577-610 (RLRRIHRRQARASALDLLLMEEGVHTVLEPGIPT) are cytoplasmic.

The protein belongs to the GDA1/CD39 NTPase family. Ca(2+) is required as a cofactor. The cofactor is Mg(2+).

The protein localises to the cytoplasmic vesicle membrane. It catalyses the reaction a ribonucleoside 5'-triphosphate + H2O = a ribonucleoside 5'-diphosphate + phosphate + H(+). The enzyme catalyses UTP + H2O = UDP + phosphate + H(+). It carries out the reaction GTP + H2O = GDP + phosphate + H(+). The catalysed reaction is CTP + H2O = CDP + phosphate + H(+). Its function is as follows. Catalyzes the hydrolysis of nucleoside triphosphates and diphosphates in a calcium- or magnesium-dependent manner. Preferentially hydrolyzes nucleoside 5'-triphosphates, with substrate preference for UTP &gt; GTP &gt; CTP. Hydrolyzes ATP and nucleoside diphosphates only to a minor extent. This Xenopus tropicalis (Western clawed frog) protein is Ectonucleoside triphosphate diphosphohydrolase 7 (entpd7).